Consider the following 143-residue polypeptide: Putative pre-16S rRNA nuclease (143 aa).

This sequence belongs to the YqgF nuclease family.

The protein localises to the cytoplasm. In terms of biological role, could be a nuclease involved in processing of the 5'-end of pre-16S rRNA. The chain is Putative pre-16S rRNA nuclease from Ralstonia pickettii (strain 12J).